A 420-amino-acid chain; its full sequence is D-tagatose-1,6-bisphosphate aldolase subunit GatZ (420 aa).

Belongs to the GatZ/KbaZ family. GatZ subfamily. As to quaternary structure, forms a complex with GatY.

Its pathway is carbohydrate metabolism; D-tagatose 6-phosphate degradation; D-glyceraldehyde 3-phosphate and glycerone phosphate from D-tagatose 6-phosphate: step 2/2. Functionally, component of the tagatose-1,6-bisphosphate aldolase GatYZ that is required for full activity and stability of the Y subunit. Could have a chaperone-like function for the proper and stable folding of GatY. When expressed alone, GatZ does not show any aldolase activity. Is involved in the catabolism of galactitol. This chain is D-tagatose-1,6-bisphosphate aldolase subunit GatZ, found in Escherichia coli O6:K15:H31 (strain 536 / UPEC).